We begin with the raw amino-acid sequence, 474 residues long: Synaptotagmin-17 (474 aa).

A disordered region spans residues 54-112 (PAQTPPWLVSNRSEDKEGDSDNTTSEPPATPQDTSPDRRRSSSDTSRSTYSLTRRISSL). A compositionally biased stretch (low complexity) spans 96–112 (SDTSRSTYSLTRRISSL). C2 domains lie at 184 to 310 (QLGM…HWWK) and 321 to 455 (ELGE…EQWH).

This sequence belongs to the synaptotagmin family.

The protein localises to the membrane. In terms of biological role, may play a role in dendrite formation by melanocytes. This chain is Synaptotagmin-17 (syt17), found in Xenopus tropicalis (Western clawed frog).